The chain runs to 118 residues: 5-hydroxyisourate hydrolase (118 aa).

His-7, Arg-46, and Tyr-115 together coordinate substrate.

The protein belongs to the transthyretin family. 5-hydroxyisourate hydrolase subfamily. In terms of assembly, homotetramer.

It catalyses the reaction 5-hydroxyisourate + H2O = 5-hydroxy-2-oxo-4-ureido-2,5-dihydro-1H-imidazole-5-carboxylate + H(+). Functionally, catalyzes the hydrolysis of 5-hydroxyisourate (HIU) to 2-oxo-4-hydroxy-4-carboxy-5-ureidoimidazoline (OHCU). In Brucella suis biovar 1 (strain 1330), this protein is 5-hydroxyisourate hydrolase.